We begin with the raw amino-acid sequence, 397 residues long: Mannonate dehydratase 2 (397 aa).

Belongs to the mannonate dehydratase family. Fe(2+) serves as cofactor. Mn(2+) is required as a cofactor.

The catalysed reaction is D-mannonate = 2-dehydro-3-deoxy-D-gluconate + H2O. It participates in carbohydrate metabolism; pentose and glucuronate interconversion. Functionally, catalyzes the dehydration of D-mannonate. The chain is Mannonate dehydratase 2 (uxuA2) from Agrobacterium fabrum (strain C58 / ATCC 33970) (Agrobacterium tumefaciens (strain C58)).